The primary structure comprises 267 residues: Coiled-coil domain-containing protein 172 (267 aa).

Coiled coils occupy residues 24–97 (MREV…CEAI) and 128–191 (LMKE…EETE).

This sequence belongs to the CCDC172 family. May interact with TEKT2.

The protein resides in the cytoplasm. Its subcellular location is the cell projection. It localises to the cilium. This is Coiled-coil domain-containing protein 172 (Ccdc172) from Mus musculus (Mouse).